A 135-amino-acid polypeptide reads, in one-letter code: Ribosome-binding factor A (135 aa).

Belongs to the RbfA family. As to quaternary structure, monomer. Binds 30S ribosomal subunits, but not 50S ribosomal subunits or 70S ribosomes.

The protein localises to the cytoplasm. Functionally, one of several proteins that assist in the late maturation steps of the functional core of the 30S ribosomal subunit. Associates with free 30S ribosomal subunits (but not with 30S subunits that are part of 70S ribosomes or polysomes). Required for efficient processing of 16S rRNA. May interact with the 5'-terminal helix region of 16S rRNA. This Hyphomonas neptunium (strain ATCC 15444) protein is Ribosome-binding factor A.